The following is a 434-amino-acid chain: MAMAKNVVVIGAQWGDEGKGKIVDWLAEEAGGVVRFQGGHNAGHTLVVGGKKTILRLIPSGILHEGLDCFIGSGVVVSPEALLGEIDELNAAGVKNVEGRLKIAPTCPLILPYHIALDQAREASRGKGKIGTTGRGIGPAYEDKVARRAIRAADLLHPEKLREKLDAVLAYYNVQLQYLHNAGPVKAEDVMAVIEKVAPRIAPMIADVSRVLNEKNKNGEKLLFEGAQGALLDIDYGTYPFVTSSNCLAGAASAGAGVGPQMLDYVLGIVKAYTTRVGSGPFPTELFDEVGAGLAERGHEFGSVTGRARRCGWFDAAALKRSIQINGISGMCITKLDVMDGVETINICVGYELPGGGKTDILPCGSDAVETCKPIYETMPGWRESTVGVKSYDALPANAKAYLKRIEEVCGAPVAIVSTGPDREETIVLHHPFA.

GTP contacts are provided by residues 15–21 (GDEGKGK) and 43–45 (GHT). Aspartate 16 acts as the Proton acceptor in catalysis. 2 residues coordinate Mg(2+): aspartate 16 and glycine 43. Residues 16–19 (DEGK), 41–44 (NAGH), threonine 133, arginine 147, glutamine 228, threonine 243, and arginine 307 contribute to the IMP site. Histidine 44 (proton donor) is an active-site residue. 303 to 309 (SVTGRAR) contributes to the substrate binding site. GTP is bound by residues arginine 309, 335 to 337 (KLD), and 418 to 420 (STG).

It belongs to the adenylosuccinate synthetase family. As to quaternary structure, homodimer. Requires Mg(2+) as cofactor.

It localises to the cytoplasm. It carries out the reaction IMP + L-aspartate + GTP = N(6)-(1,2-dicarboxyethyl)-AMP + GDP + phosphate + 2 H(+). It functions in the pathway purine metabolism; AMP biosynthesis via de novo pathway; AMP from IMP: step 1/2. Functionally, plays an important role in the de novo pathway of purine nucleotide biosynthesis. Catalyzes the first committed step in the biosynthesis of AMP from IMP. This chain is Adenylosuccinate synthetase, found in Neisseria gonorrhoeae (strain NCCP11945).